Here is a 180-residue protein sequence, read N- to C-terminus: Ribulose bisphosphate carboxylase small subunit, chloroplastic 1 (180 aa).

The N-terminal 56 residues, 1–56 (MASSVLSSAAVATRSNVAQANMVAPFTGLKSAASFPVSRKQNLDITSIASNGGRVQ), are a transit peptide targeting the chloroplast.

Belongs to the RuBisCO small chain family. In terms of assembly, heterohexadecamer of 8 large and 8 small subunits.

The protein localises to the plastid. It is found in the chloroplast. RuBisCO catalyzes two reactions: the carboxylation of D-ribulose 1,5-bisphosphate, the primary event in carbon dioxide fixation, as well as the oxidative fragmentation of the pentose substrate. Both reactions occur simultaneously and in competition at the same active site. Although the small subunit is not catalytic it is essential for maximal activity. This Nicotiana sylvestris (Wood tobacco) protein is Ribulose bisphosphate carboxylase small subunit, chloroplastic 1.